A 265-amino-acid chain; its full sequence is Putative pyruvate, phosphate dikinase regulatory protein 2 (265 aa).

150–157 (GVSRTSKT) is a binding site for ADP.

The protein belongs to the pyruvate, phosphate/water dikinase regulatory protein family. PDRP subfamily.

The enzyme catalyses N(tele)-phospho-L-histidyl/L-threonyl-[pyruvate, phosphate dikinase] + ADP = N(tele)-phospho-L-histidyl/O-phospho-L-threonyl-[pyruvate, phosphate dikinase] + AMP + H(+). The catalysed reaction is N(tele)-phospho-L-histidyl/O-phospho-L-threonyl-[pyruvate, phosphate dikinase] + phosphate + H(+) = N(tele)-phospho-L-histidyl/L-threonyl-[pyruvate, phosphate dikinase] + diphosphate. Its function is as follows. Bifunctional serine/threonine kinase and phosphorylase involved in the regulation of the pyruvate, phosphate dikinase (PPDK) by catalyzing its phosphorylation/dephosphorylation. This is Putative pyruvate, phosphate dikinase regulatory protein 2 from Latilactobacillus sakei subsp. sakei (strain 23K) (Lactobacillus sakei subsp. sakei).